A 481-amino-acid chain; its full sequence is 6-phosphogluconate dehydrogenase, decarboxylating (481 aa).

Residues 11–16 (GLAVMG), 34–36 (NRT), 76–78 (VKG), and Asn104 each bind NADP(+). Residues Asn104 and 130-132 (SGG) contribute to the substrate site. Lys184 (proton acceptor) is an active-site residue. 187 to 188 (HN) provides a ligand contact to substrate. Glu191 functions as the Proton donor in the catalytic mechanism. 5 residues coordinate substrate: Tyr192, Lys259, Arg286, Arg445, and His451.

The protein belongs to the 6-phosphogluconate dehydrogenase family. As to quaternary structure, homodimer.

It catalyses the reaction 6-phospho-D-gluconate + NADP(+) = D-ribulose 5-phosphate + CO2 + NADPH. The protein operates within carbohydrate degradation; pentose phosphate pathway; D-ribulose 5-phosphate from D-glucose 6-phosphate (oxidative stage): step 3/3. In terms of biological role, catalyzes the oxidative decarboxylation of 6-phosphogluconate to ribulose 5-phosphate and CO(2), with concomitant reduction of NADP to NADPH. The sequence is that of 6-phosphogluconate dehydrogenase, decarboxylating (Pgd) from Drosophila simulans (Fruit fly).